The following is a 310-amino-acid chain: MSKARLRKGRALTGVVLLNKPQGMSSNHALQRVKRLYNAQKAGHTGALDPLATGILPVCLGEATKFSQYLLDADKAYRVEATLGVRTTTSDAEGEVVEEKPVAVDTAKVADAIKQFIGEQDQSPSIYSALKHEGRPLYYYARQGIEVPKKTRTITVHSIELLNIQDNKVTLQVSCSKGTYIRTLVDDLGQLLGCGAHVSMLHRNAVADIAEAAMVTLEQLETLAEEGYEGLDALLHPADLLLGQLPEVTVTQAQTRDFLHGQPIPLPEQNGNDAEEWRVATENSLFLGVARVKNAELWPRRVIAREHVDL.

Aspartate 49 serves as the catalytic Nucleophile.

The protein belongs to the pseudouridine synthase TruB family. Type 1 subfamily.

The enzyme catalyses uridine(55) in tRNA = pseudouridine(55) in tRNA. In terms of biological role, responsible for synthesis of pseudouridine from uracil-55 in the psi GC loop of transfer RNAs. This Idiomarina loihiensis (strain ATCC BAA-735 / DSM 15497 / L2-TR) protein is tRNA pseudouridine synthase B.